The sequence spans 529 residues: Beta-glucosidase 11 (529 aa).

An N-terminal signal peptide occupies residues 1–25; it reads MAVAGAMVMSGALLLLHLLAFTCVA. A beta-D-glucoside-binding positions include Gln54, His157, and 202–203; that span reads NE. The Proton donor role is filled by Glu203. Residues Cys222 and Cys230 are joined by a disulfide bond. A beta-D-glucoside is bound at residue Tyr346. Asn361 carries an N-linked (GlcNAc...) asparagine glycan. Glu417 is a binding site for a beta-D-glucoside. Glu417 (nucleophile) is an active-site residue. Asn425 carries an N-linked (GlcNAc...) asparagine glycan. A beta-D-glucoside contacts are provided by residues Trp466, 473–474, and Phe482; that span reads EW.

Belongs to the glycosyl hydrolase 1 family.

It carries out the reaction Hydrolysis of terminal, non-reducing beta-D-glucosyl residues with release of beta-D-glucose.. This Oryza sativa subsp. japonica (Rice) protein is Beta-glucosidase 11 (BGLU11).